The primary structure comprises 592 residues: MASEIHMTGPMCLIESTNGRLMANPEALKILSAITQPMVVVAIVGLYRTGKSYLMNKLAGKKKGFSLGSTVQSHTKGIWMWCVPHPKKPGHILVLLDTEGLGDVEKGDNQNDSWIFALAVLLSSTFVYNSIGTINQQAMDQLYYVTELTHRIRSKSSPDENENEVEDSADFVSFFPDFVWTLRDFSLDLEADGQPLTPDEYLTYSLKLKKGTSQKDETFNLPRLCIRKFFPKKKCFVFDRPVHRRKLAQLEKLQDEELDPEFVQQVADFCSYIFSNSKTKTLSGGIQVNGPRLESLVLTYVNAISSGDLPCMENAVLALAQIENSAAVQKAIAHYEQQMGQKVQLPTESLQELLDLHRDSEREAIEVFIRSSFKDVDHLFQKELAAQLEKKRDDFCKQNQEASSDRCSGLLQVIFSPLEEEVKAGIYSKPGGYRLFVQKLQDLKKKYYEEPRKGIQAEEILQTYLKSKESMTDAILQTDQTLTEKEKEIEVERVKAESAQASAKMLQEMQRKNEQMMEQKERSYQEHLKQLTEKMENDRVQLLKEQERTLALKLQEQEQLLKEGFQKESRIMKNEIQDLQTKMRRRKACTIS.

The GTPase domain (Globular) stretch occupies residues 1 to 311; it reads MASEIHMTGP…NAISSGDLPC (311 aa). Positions 35-278 constitute a GB1/RHD3-type G domain; that stretch reads TQPMVVVAIV…FCSYIFSNSK (244 aa). GTP-binding positions include 45–52, 67–69, and 97–101; these read GLYRTGKS, LGS, and DTEGL. S156 carries the post-translational modification Phosphoserine. Cysteine methyl ester is present on C589. C589 carries S-farnesyl cysteine lipidation. Phosphothreonine is present on T590. A propeptide spans 590 to 592 (removed in mature form); that stretch reads TIS.

It belongs to the TRAFAC class dynamin-like GTPase superfamily. GB1/RHD3 GTPase family. GB1 subfamily. Homodimer; homodimerization occurs upon GTP-binding and is required for the second hydrolysis step from GDP to GMP. Undergoes conformational changes and oligomerization upon GTP-binding and hydrolysis. Heterodimer with other family members, including GBP2, GBP3, GBP4 and GBP5. Dimerization regulates subcellular location to membranous structures. Interacts with SQSTM1. Interacts (when phosphorylated) with 14-3-3 protein sigma (SFN); leading to GBP1 retention in the cytosol and inactivation. In terms of processing, isoprenylation is required for proper subcellular location. Phosphorylated at Ser-156 by PIM1 in absence of infection, inhibits GBP1: phosphorylation promotes interaction with 14-3-3 protein sigma (SFN), leading to GBP1 retention in the cytosol. Dephosphorylated in response to infection, liberating GBP1.

The protein resides in the cytoplasmic vesicle membrane. The protein localises to the golgi apparatus membrane. It localises to the cell membrane. It is found in the cytoplasm. Its subcellular location is the cytosol. The protein resides in the secreted. The catalysed reaction is GTP + H2O = GDP + phosphate + H(+). It carries out the reaction GDP + H2O = GMP + phosphate + H(+). In terms of biological role, interferon (IFN)-inducible GTPase that plays important roles in innate immunity against a diverse range of bacterial, viral and protozoan pathogens. Hydrolyzes GTP to GMP in two consecutive cleavage reactions: GTP is first hydrolyzed to GDP and then to GMP in a processive manner. Following infection, recruited to the pathogen-containing vacuoles or vacuole-escaped bacteria and promotes both inflammasome assembly and autophagy. Acts as a positive regulator of inflammasome assembly by facilitating the detection of inflammasome ligands from pathogens. Involved in the lysis of pathogen-containing vacuoles, releasing pathogens into the cytosol. Following pathogen release in the cytosol, forms a protein coat in a GTPase-dependent manner that encapsulates pathogens and promotes the detection of ligands by pattern recognition receptors. Plays a key role in inflammasome assembly in response to infection by Gram-negative bacteria: following pathogen release in the cytosol, forms a protein coat that encapsulates Gram-negative bacteria and directly binds to lipopolysaccharide (LPS), disrupting the O-antigen barrier and unmasking lipid A that is that detected by the non-canonical inflammasome effector CASP4/CASP11. Also promotes recruitment of proteins that mediate bacterial cytolysis, leading to release double-stranded DNA (dsDNA) that activates the AIM2 inflammasome. Involved in autophagy by regulating bacteriolytic peptide generation via its interaction with ubiquitin-binding protein SQSTM1, which delivers monoubiquitinated proteins to autolysosomes for the generation of bacteriolytic peptides. Confers protection to several pathogens, including the bacterial pathogens L.monocytogenes and M.bovis BCG as well as the protozoan pathogen T.gondii. Exhibits antiviral activity against influenza virus. The sequence is that of Guanylate-binding protein 1 (GBP1) from Pongo abelii (Sumatran orangutan).